Consider the following 221-residue polypeptide: Ribonuclease S-2 (221 aa).

Residues 1 to 20 form the signal peptide; that stretch reads MIYIFTMVFSLNVLILSSSA. Residue Q31 coordinates RNA. The cysteines at positions 37 and 44 are disulfide-linked. RNA-binding positions include H55, 91–92, F101, 104–105, and 108–109; these read NV, KQ, and KH. Residue H55 is the Proton donor of the active site. Residues C70 and C112 are joined by a disulfide bond. Residue N91 is glycosylated (N-linked (GlcNAc...) asparagine). Q105 is an active-site residue. H109 serves as the catalytic Proton acceptor. 3 N-linked (GlcNAc...) asparagine glycosylation sites follow: N137, N153, and N195. Cystine bridges form between C176-C214 and C191-C202.

It belongs to the RNase T2 family. N-linked core structure at Asn-91, Asn-137, and Asn-153 contains xylose and at Asn-195 contains xylose and fucose.

It localises to the secreted. Its subcellular location is the extracellular space. The enzyme catalyses a ribonucleotidyl-ribonucleotide-RNA + H2O = a 3'-end 3'-phospho-ribonucleotide-RNA + a 5'-end dephospho-ribonucleoside-RNA + H(+). Functionally, self-incompatibility (SI) is the inherited ability of a flowering plant to prevent self-fertilization by discriminating between self and non-self pollen during pollination. In many species, self-incompatibility is controlled by the single, multiallelic locus S. In Pyrus pyrifolia (Chinese pear), this protein is Ribonuclease S-2.